We begin with the raw amino-acid sequence, 425 residues long: Enolase (425 aa).

Glutamine 162 provides a ligand contact to (2R)-2-phosphoglycerate. Residue glutamate 204 is the Proton donor of the active site. Aspartate 241, glutamate 284, and aspartate 311 together coordinate Mg(2+). (2R)-2-phosphoglycerate is bound by residues lysine 336, arginine 365, serine 366, and lysine 387. Residue lysine 336 is the Proton acceptor of the active site.

This sequence belongs to the enolase family. Requires Mg(2+) as cofactor.

The protein resides in the cytoplasm. It localises to the secreted. The protein localises to the cell surface. It carries out the reaction (2R)-2-phosphoglycerate = phosphoenolpyruvate + H2O. The protein operates within carbohydrate degradation; glycolysis; pyruvate from D-glyceraldehyde 3-phosphate: step 4/5. Catalyzes the reversible conversion of 2-phosphoglycerate (2-PG) into phosphoenolpyruvate (PEP). It is essential for the degradation of carbohydrates via glycolysis. The protein is Enolase of Brucella anthropi (strain ATCC 49188 / DSM 6882 / CCUG 24695 / JCM 21032 / LMG 3331 / NBRC 15819 / NCTC 12168 / Alc 37) (Ochrobactrum anthropi).